A 227-amino-acid polypeptide reads, in one-letter code: LysM and putative peptidoglycan-binding domain-containing protein 1 (227 aa).

2 positions are modified to phosphoserine: serine 23 and serine 33. The LysM domain occupies leucine 40 to isoleucine 84. The tract at residues asparagine 95–phenylalanine 157 is disordered. The segment covering aspartate 98–glutamate 108 has biased composition (acidic residues). Serine 99 carries the post-translational modification Phosphoserine. The span at glutamine 143–leucine 152 shows a compositional bias: polar residues. A phosphoserine mark is found at serine 166, serine 181, serine 194, and serine 212. The tract at residues lysine 169–leucine 227 is disordered. Over residues threonine 216–leucine 227 the composition is skewed to basic and acidic residues.

The polypeptide is LysM and putative peptidoglycan-binding domain-containing protein 1 (Lysmd1) (Rattus norvegicus (Rat)).